The sequence spans 328 residues: GMP reductase (328 aa).

Cys-176 (thioimidate intermediate) is an active-site residue. NADP(+) is bound at residue 205-228 (IIADGGIRTHGDIAKSIRFGASMI).

Belongs to the IMPDH/GMPR family. GuaC type 2 subfamily.

The enzyme catalyses IMP + NH4(+) + NADP(+) = GMP + NADPH + 2 H(+). In terms of biological role, catalyzes the irreversible NADPH-dependent deamination of GMP to IMP. It functions in the conversion of nucleobase, nucleoside and nucleotide derivatives of G to A nucleotides, and in maintaining the intracellular balance of A and G nucleotides. This is GMP reductase from Streptococcus pneumoniae serotype 4 (strain ATCC BAA-334 / TIGR4).